A 1065-amino-acid chain; its full sequence is Pumilio domain-containing protein P35G2.14 (1065 aa).

3 disordered regions span residues 1–78 (MHQD…SLRS), 130–265 (ITSK…PWSP), and 422–573 (TTGF…NTNS). Over residues 16–44 (RNTISKPSNNNPPLDMSSLNNDFGQQLDS) the composition is skewed to polar residues. The span at 59–77 (NPSSNFNDSNRSNISSSLR) shows a compositional bias: low complexity. 2 stretches are compositionally biased toward polar residues: residues 134 to 151 (LQNN…RGRT) and 169 to 189 (SSVS…HFNP). Composition is skewed to low complexity over residues 190 to 224 (SSSS…SEII) and 236 to 246 (SASNAANSGSN). 2 stretches are compositionally biased toward polar residues: residues 247–262 (TIRA…NTLP) and 434–455 (GLNT…TFEV). The residue at position 260 (Thr-260) is a Phosphothreonine. Residues 470–483 (PLGSLSSRPKPSSS) show a composition bias toward low complexity. Polar residues-rich tracts occupy residues 495–522 (LKTS…SSSP) and 529–551 (IHNQ…NGLR). Phosphoserine occurs at positions 506, 511, and 515. A Phosphothreonine modification is found at Thr-554. Residues 559–573 (NISTRSSSESNNTNS) are compositionally biased toward low complexity. An RRM domain is found at 592–666 (HALWVGNLPS…DPVCISFAKV (75 aa)). In terms of domain architecture, PUM-HD spans 712–1065 (DLSKIYQILN…ELKKLAEVCA (354 aa)). 6 Pumilio repeats span residues 771-808 (AINW…MMLE), 809-844 (RIAP…RLIA), 846-884 (HLQP…AILN), 886-917 (FWVI…VLVA), 919-954 (AITV…ILLT), and 956-993 (RFVQ…LVVD).

It localises to the cytoplasm. This is Pumilio domain-containing protein P35G2.14 from Schizosaccharomyces pombe (strain 972 / ATCC 24843) (Fission yeast).